Consider the following 55-residue polypeptide: Large ribosomal subunit protein bL33 (55 aa).

This sequence belongs to the bacterial ribosomal protein bL33 family.

The protein is Large ribosomal subunit protein bL33 of Ruegeria pomeroyi (strain ATCC 700808 / DSM 15171 / DSS-3) (Silicibacter pomeroyi).